The sequence spans 1004 residues: Cadmium/zinc-transporting ATPase HMA3 (1004 aa).

Residues 42–108 (KKTYLDVLGV…ALNKAGLEAS (67 aa)) form the HMA domain. The next 8 helical transmembrane spans lie at 120–140 (RWPSPYIVASGVLLTASFFEW), 144–164 (PLQCLAVAAVVAGAPPMVRRG), 171–191 (LSLDINVLMLIAVAGALCLGD), 193–213 (TEAGAIVFLFTTAEWLETLAC), 340–360 (CAKYYTPAVVVVAAGVALIPA), 371–391 (WKLALVMLVSACPCALVLSTP), 683–703 (IAVNVAGSVAVKAAVLALAAA), and 707–727 (VLWAAVLADVGTCLLVVLNSM). Residues 931 to 952 (TGCGASKRSPPAEGSCSGGEGG) form a disordered region.

It belongs to the cation transport ATPase (P-type) (TC 3.A.3) family. Type IB subfamily. In terms of tissue distribution, specifically expressed in roots.

Its subcellular location is the vacuole membrane. It carries out the reaction Zn(2+)(in) + ATP + H2O = Zn(2+)(out) + ADP + phosphate + H(+). It catalyses the reaction Cd(2+)(in) + ATP + H2O = Cd(2+)(out) + ADP + phosphate + H(+). Its function is as follows. Root-specific cadmium (Cd) transporter that mediates Cd efflux in root vacuoles. Involved in Cd detoxification by sequestrating Cd into root vacuoles and limiting translocation of Cd from the roots to the shoots, and accumulation in grains. This chain is Cadmium/zinc-transporting ATPase HMA3, found in Oryza sativa subsp. japonica (Rice).